A 334-amino-acid chain; its full sequence is MAEARRLPPPLPPRLDWFVHTQADLLAQSGIPEWFHGTISREAAENMLESQPLGTFLIRVSHSHVGYTLSYKAQTCCRHFMVKLSEDGTCAFAGDHMTHASLHALVTFHQQKPIRPFGELLTQACGQEDPANVDYEDLFLYSNALVQDAESQILRTEVQRSSCPPEEASERKPSTTTKGEFASASCSPKALFEDSGQKLWKNLRSLPQTSQRVKQRLTSHLLAMNLLGDARQVAQQHHSPVTRAFSWDSTSHSEDSCAATTSLQNPAEPQALRGREATFRDSRPASWRKAFSGVKAWRGKVVRALSAQEPVDFPEAQGWLPEEYLPPPPFAPGY.

Residues 34 to 125 enclose the SH2 domain; it reads WFHGTISREA…PFGELLTQAC (92 aa). Disordered regions lie at residues 157–181 and 254–280; these read EVQR…KGEF and EDSC…ATFR. Polar residues predominate over residues 258 to 267; sequence AATTSLQNPA.

As to quaternary structure, interacts with FES and TNK2. Post-translationally, may be phosphorylated by FES and ACK1. In terms of tissue distribution, predominantly expressed in spleen and thymus. Appears not to be expressed in heart, brain, liver, kidney, embryo, lung and ovary.

The protein localises to the cytoplasm. It is found in the mitochondrion. Its function is as follows. Adapter protein involved in tyrosine kinase and CD28 signaling. May be a modulator of the apoptotic response through its ability to affect mitochondrial stability. This chain is Hematopoietic SH2 domain-containing protein (Hsh2d), found in Mus musculus (Mouse).